The primary structure comprises 269 residues: Phosphonoacetaldehyde hydrolase (269 aa).

Asp-10 serves as the catalytic Nucleophile. The Mg(2+) site is built by Asp-10 and Ala-12. The active-site Schiff-base intermediate with substrate is the Lys-52. Asp-186 is a binding site for Mg(2+).

It belongs to the HAD-like hydrolase superfamily. PhnX family. As to quaternary structure, homodimer. The cofactor is Mg(2+).

The catalysed reaction is phosphonoacetaldehyde + H2O = acetaldehyde + phosphate + H(+). Its function is as follows. Involved in phosphonate degradation. This is Phosphonoacetaldehyde hydrolase from Klebsiella pneumoniae subsp. pneumoniae (strain ATCC 700721 / MGH 78578).